A 522-amino-acid chain; its full sequence is Zinc finger protein C25B8.19c (522 aa).

Disordered stretches follow at residues M1–T25, D61–N96, Q235–T265, Q311–S386, and N413–S462. A compositionally biased stretch (low complexity) spans A84–N96. Composition is skewed to polar residues over residues Q311–P321 and A335–G344. Positions N345–Q362 are enriched in low complexity. Over residues N413–N427 the composition is skewed to polar residues. Basic and acidic residues predominate over residues Y428–A438. Residues S453–S462 are compositionally biased toward low complexity. 2 consecutive C2H2-type zinc fingers follow at residues Y468 to P495 and F496 to L522.

Its subcellular location is the nucleus. The chain is Zinc finger protein C25B8.19c from Schizosaccharomyces pombe (strain 972 / ATCC 24843) (Fission yeast).